The chain runs to 189 residues: Keratin-associated protein 5-2 (189 aa).

8 tandem repeats follow at residues 21–24 (CCKP), 27–30 (CCKP), 33–36 (CCVP), 134–137 (CCKP), 144–147 (CCKP), 159–162 (CCKP), 169–172 (CCKP), and 179–182 (CCAP). The interval 27 to 182 (CCKPVCCCVP…CCCQSSCCAP (156 aa)) is 8 X 4 AA repeats of C-C-X-P.

Belongs to the KRTAP type 5 family. Interacts with hair keratins.

Functionally, in the hair cortex, hair keratin intermediate filaments are embedded in an interfilamentous matrix, consisting of hair keratin-associated protein (KRTAP), which are essential for the formation of a rigid and resistant hair shaft through their extensive disulfide bond cross-linking with abundant cysteine residues of hair keratins. The matrix proteins include the high-sulfur and high-glycine-tyrosine keratins. This chain is Keratin-associated protein 5-2, found in Mus musculus (Mouse).